The primary structure comprises 178 residues: Inorganic pyrophosphatase (178 aa).

The substrate site is built by Lys30, Arg44, and Tyr56. 3 residues coordinate Mg(2+): Asp66, Asp71, and Asp103. Residue Tyr140 coordinates substrate.

It belongs to the PPase family. In terms of assembly, homohexamer. The cofactor is Mg(2+).

It localises to the cytoplasm. The catalysed reaction is diphosphate + H2O = 2 phosphate + H(+). In terms of biological role, catalyzes the hydrolysis of inorganic pyrophosphate (PPi) forming two phosphate ions. The chain is Inorganic pyrophosphatase from Pyrococcus abyssi (strain GE5 / Orsay).